Reading from the N-terminus, the 1738-residue chain is Complement C4-B (1738 aa).

An N-terminal signal peptide occupies residues 1–19 (MRLLWGLAWVFSFCASSLQ). A disulfide bridge links cysteine 66 with cysteine 95. The N-linked (GlcNAc...) asparagine glycan is linked to asparagine 224. A disulfide bond links cysteine 633 and cysteine 667. Residues 674 to 677 (RQKR) constitute a propeptide that is removed on maturation. Cystine bridges form between cysteine 700-cysteine 726, cysteine 701-cysteine 733, and cysteine 714-cysteine 734. One can recognise an Anaphylatoxin-like domain in the interval 700-734 (CCQDGMTKLPMKRTCEQRAARVPQQACREPFLSCC). A glycan (N-linked (GlcNAc...) asparagine) is linked at asparagine 743. Residues 1006–1009 (CAEQ) constitute a cross-link (isoglutamyl cysteine thioester (Cys-Gln)). 2 N-linked (GlcNAc...) asparagine glycosylation sites follow: asparagine 1324 and asparagine 1387. A sulfotyrosine mark is found at tyrosine 1413, tyrosine 1416, and tyrosine 1417. Positions 1444 to 1447 (RRRR) are excised as a propeptide. 5 disulfides stabilise this stretch: cysteine 1465/cysteine 1529, cysteine 1577/cysteine 1582, cysteine 1589/cysteine 1667, cysteine 1612/cysteine 1736, and cysteine 1712/cysteine 1721. The 148-residue stretch at 1589 to 1736 (CPRLLRSLER…FLMEFSSRGC (148 aa)) folds into the NTR domain.

In absence of complement activation, circulates in blood as a disulfide-linked trimer of an alpha, beta and gamma chain. As to quaternary structure, complement C4b is composed of complement C4b-A, complement C4 beta and complement C4 gamma chains that are associated via disulfide bonds. Non-enzymatic component of the C3 convertase, also named C4bC2b, composed of the serine protease complement C2b (C2), as well as complement C4b. Non-enzymatic component of the C5 convertase, also named C4bC2bC3b, composed of the serine protease complement C2b (C2), complement C3b, as well as complement C4b. Prior to secretion, the single-chain precursor is enzymatically cleaved by plasminogen (PLG) to yield non-identical chains alpha, beta and gamma. During activation of the complement systems, the alpha chain is cleaved into C4a and C4b by different proteases depending on the complement pathway: C4b stays linked to the beta and gamma chains, while C4a is released in the plasma. The alpha chain is cleaved by C1S to generate C4a and C4b following activation by the classical complement system. The alpha chain is cleaved to generate C4a and C4b by MASP2 following activation by the lectin complement system. The alpha chain is cleaved by GZMK to generate C4a and C4b following activation by the GZMK complement system. Further degradation of C4b by C1 into the inactive fragments C4c and C4d blocks the generation of C3 convertase. The proteolytic cleavages often are incomplete so that many structural forms can be found in plasma. In terms of processing, upon activation, the internal thioester bond reacts with carbohydrate antigens on the target surface to form amide or ester bonds, leading to covalent association with the surface of pathogens. Post-translationally, complement C4b interacts with complement C3b via a thioester linkage.

It localises to the secreted. Its subcellular location is the cell surface. Precursor of non-enzymatic components of the classical, lectin and GZMK complement pathways, which consist in a cascade of proteins that leads to phagocytosis and breakdown of pathogens and signaling that strengthens the adaptive immune system. Its function is as follows. Non-enzymatic component of C3 and C5 convertases. Generated following cleavage by complement proteases (C1S, MASP2 or GZMK, depending on the complement pathway), it covalently attaches to the surface of pathogens, where it acts as an opsonin that marks the surface of antigens for removal. It then recruits the serine protease complement C2b to form the C3 and C5 convertases, which cleave and activate C3 and C5, respectively, the next components of the complement pathways. Complement C4b-A isotype is responsible for effective binding to form amide bonds with immune aggregates or protein antigens, while complement C4b-B isotype catalyzes the transacylation of the thioester carbonyl group to form ester bonds with carbohydrate antigens. In terms of biological role, putative humoral mediator released following cleavage by complement proteases (C1S, MASP2 or GZMK, depending on the complement pathway). While it is strongly similar to anaphylatoxins, its role is unclear. Was reported to act as a mediator of local inflammatory process; however these effects were probably due to contamination with C3a and/C5a anaphylatoxins in biological assays. This Mus musculus (Mouse) protein is Complement C4-B.